The primary structure comprises 575 residues: 3-hydroxy-3-methylglutaryl-coenzyme A reductase 1 (575 aa).

Residues 1-13 are compositionally biased toward basic residues; sequence MDTTGRLHHRKHA. Residues 1-25 form a disordered region; sequence MDTTGRLHHRKHATPVEDRSPTTPK. The next 2 membrane-spanning stretches (helical) occupy residues 29–49 and 73–93; these read ALPL…FSVA and EIVA…FFGI. Residues 97-160 are linker; sequence QSFIARASHD…PLIAPLVSEE (64 aa). Asn132 is a glycosylation site (N-linked (GlcNAc...) asparagine). A catalytic region spans residues 161–575; the sequence is DEMIVNSVVD…SSKDMSKAAS (415 aa). The Charge relay system role is filled by Glu254. N-linked (GlcNAc...) asparagine glycosylation is present at Asn318. Residues Lys386 and Asp462 each act as charge relay system in the active site. A helical transmembrane segment spans residues 531 to 551; it reads LLAAIVAGSVLAGELSLMSAI. The active-site Proton donor is the His560. N-linked (GlcNAc...) asparagine glycosylation is present at Asn564.

This sequence belongs to the HMG-CoA reductase family.

The protein resides in the endoplasmic reticulum membrane. It localises to the mitochondrion membrane. The protein localises to the plastid membrane. The catalysed reaction is (R)-mevalonate + 2 NADP(+) + CoA = (3S)-3-hydroxy-3-methylglutaryl-CoA + 2 NADPH + 2 H(+). The protein operates within metabolic intermediate biosynthesis; (R)-mevalonate biosynthesis; (R)-mevalonate from acetyl-CoA: step 3/3. Functionally, catalyzes the synthesis of mevalonate. The specific precursor of all isoprenoid compounds present in plants. This chain is 3-hydroxy-3-methylglutaryl-coenzyme A reductase 1 (HMGR1), found in Hevea brasiliensis (Para rubber tree).